A 303-amino-acid chain; its full sequence is Lipoyl synthase (303 aa).

Residues Cys35, Cys40, Cys46, Cys61, Cys65, Cys68, and Ser273 each coordinate [4Fe-4S] cluster. The 216-residue stretch at 47-262 (FRERQATFLI…KELAEKMGFR (216 aa)) folds into the Radical SAM core domain.

It belongs to the radical SAM superfamily. Lipoyl synthase family. Requires [4Fe-4S] cluster as cofactor.

The protein resides in the cytoplasm. It catalyses the reaction [[Fe-S] cluster scaffold protein carrying a second [4Fe-4S](2+) cluster] + N(6)-octanoyl-L-lysyl-[protein] + 2 oxidized [2Fe-2S]-[ferredoxin] + 2 S-adenosyl-L-methionine + 4 H(+) = [[Fe-S] cluster scaffold protein] + N(6)-[(R)-dihydrolipoyl]-L-lysyl-[protein] + 4 Fe(3+) + 2 hydrogen sulfide + 2 5'-deoxyadenosine + 2 L-methionine + 2 reduced [2Fe-2S]-[ferredoxin]. It functions in the pathway protein modification; protein lipoylation via endogenous pathway; protein N(6)-(lipoyl)lysine from octanoyl-[acyl-carrier-protein]: step 2/2. Catalyzes the radical-mediated insertion of two sulfur atoms into the C-6 and C-8 positions of the octanoyl moiety bound to the lipoyl domains of lipoate-dependent enzymes, thereby converting the octanoylated domains into lipoylated derivatives. This chain is Lipoyl synthase, found in Geobacter sulfurreducens (strain ATCC 51573 / DSM 12127 / PCA).